The sequence spans 1390 residues: DNA-directed RNA polymerase III subunit RPC1 (1390 aa).

Zn(2+) contacts are provided by C69, C72, C79, H82, C109, and C112. Residue K144 participates in DNA binding. 2 residues coordinate Zn(2+): C156 and C159. Residues K167, S326, K348, R353, R360, and R366 each coordinate DNA. At K445 the chain carries N6-acetyllysine. R464 is an RNA binding site. Mg(2+) is bound by residues D499, D501, and D503. RNA is bound at residue D503. Residues 843–884 are bridging helix; that stretch reads TPTEFFFHTMAGREGLVDTAVKTAETGYMQRRLVKSLEDLCS. The tract at residues 1029–1070 is trigger loop; sequence PGSAVGALCAQSIGEPGTQMTLKTFHFAGVASMNITLGVPRI. Residues R1159, R1305, and K1323 each contribute to the DNA site.

Belongs to the RNA polymerase beta' chain family. As to quaternary structure, component of the RNA polymerase III (Pol III) (Pol III) complex consisting of 17 subunits: a ten-subunit catalytic core composed of POLR3A/RPC1, POLR3B/RPC2, POLR1C/RPAC1, POLR1D/RPAC2, POLR3K/RPC10, POLR2E/RPABC1, POLR2F/RPABC2, POLR2H/RPABC3, POLR2K/RPABC4 and POLR2L/RPABC5; a mobile stalk composed of two subunits POLR3H/RPC8 and CRCP/RPC9, protruding from the core and functioning primarily in transcription initiation; and additional subunits homologous to general transcription factors of the RNA polymerase II machinery, POLR3C/RPC3-POLR3F/RPC6-POLR3G/RPC7 heterotrimer required for transcription initiation and POLR3D/RPC4-POLR3E/RPC5 heterodimer involved in both transcription initiation and termination. Pol III exists as two alternative complexes defined by the mutually exclusive incorporation of subunit POLR3G/RPC7alpha or POLR3GL/RPC7beta. The presence of POLR3G/RPC7alpha or POLR3GL/RPC7beta differentially modulates the transcription potential of Pol III, with POLR3G/RPC7alpha specifically associated with transcription of snaR-A non-coding RNAs. As part of the RNA polymerase III complex, interacts with PKP2. Mg(2+) serves as cofactor. Expressed in the brain, in the cortex and the white matter (at protein level).

It localises to the nucleus. It is found in the cytoplasm. The protein localises to the cytosol. The enzyme catalyses RNA(n) + a ribonucleoside 5'-triphosphate = RNA(n+1) + diphosphate. Catalytic core component of RNA polymerase III (Pol III), a DNA-dependent RNA polymerase which synthesizes small non-coding RNAs using the four ribonucleoside triphosphates as substrates. Synthesizes 5S rRNA, snRNAs, tRNAs and miRNAs from at least 500 distinct genomic loci. Pol III-mediated transcription cycle proceeds through transcription initiation, transcription elongation and transcription termination stages. During transcription initiation, Pol III is recruited to DNA promoters type I, II or III with the help of general transcription factors and other specific initiation factors. Once the polymerase has escaped from the promoter it enters the elongation phase during which RNA is actively polymerized, based on complementarity with the template DNA strand. Transcription termination involves the release of the RNA transcript and polymerase from the DNA. Forms Pol III active center together with the second largest subunit POLR3B/RPC2. Appends one nucleotide at a time to the 3' end of the nascent RNA, with POLR3A/RPC1 contributing a Mg(2+)-coordinating DxDGD motif, and POLR3B/RPC2 participating in the coordination of a second Mg(2+) ion and providing lysine residues believed to facilitate Watson-Crick base pairing between the incoming nucleotide and template base. Typically, Mg(2+) ions direct a 5' nucleoside triphosphate to form a phosphodiester bond with the 3' hydroxyl of the preceding nucleotide of the nascent RNA, with the elimination of pyrophosphate. Pol III plays a key role in sensing and limiting infection by intracellular bacteria and DNA viruses. Acts as a nuclear and cytosolic DNA sensor involved in innate immune response. Can sense non-self dsDNA that serves as template for transcription into dsRNA. The non-self RNA polymerase III transcripts, such as Epstein-Barr virus-encoded RNAs (EBERs) induce type I interferon and NF-kappa-B through the RIG-I pathway. This is DNA-directed RNA polymerase III subunit RPC1 from Homo sapiens (Human).